We begin with the raw amino-acid sequence, 667 residues long: Endogenous retrovirus group K member 5 Gag polyprotein (667 aa).

Glycine 2 carries N-myristoyl glycine lipidation. Residues 166–188 (KGPELVGPSESKPRGPSPLPAGQ) are disordered. CCHC-type zinc fingers lie at residues 543 to 560 (KKCY…SCPV) and 580 to 597 (GLCP…QCHS). The segment at 598–667 (KFDKDGQPLS…CPAPQQAAPQ (70 aa)) is disordered. Residues 648–667 (GVSQLQQSNSCPAPQQAAPQ) are compositionally biased toward polar residues.

The protein belongs to the beta type-B retroviral Gag protein family. HERV class-II K(HML-2) gag subfamily. Post-translationally, myristoylation is essential for retroviral assembly. Alteration of the glycine residue leads to a block in the budding of particles and an accumulation of Gag inside the cell. Specific enzymatic cleavages may yield mature proteins.

The protein resides in the cell membrane. Its function is as follows. The products of the Gag polyproteins of infectious retroviruses perform highly complex orchestrated tasks during the assembly, budding, maturation, and infection stages of the viral replication cycle. During viral assembly, the proteins form membrane associations and self-associations that ultimately result in budding of an immature virion from the infected cell. Gag precursors also function during viral assembly to selectively bind and package two plus strands of genomic RNA. Endogenous Gag proteins may have kept, lost or modified their original function during evolution. This chain is Endogenous retrovirus group K member 5 Gag polyprotein (ERVK-5), found in Homo sapiens (Human).